The chain runs to 130 residues: MSTEFNYATGRRKTAVARTRLYPGNGTIKINGRPLENYFPRKSLQMIIRQPLVHTKLLDKYDIKINVSGGGVSGQAEAVRHGISRALLEVNPELRSLLKPVGFLTRDARQKERKKYGLRAARAKYQYSKR.

The protein belongs to the universal ribosomal protein uS9 family.

In Lawsonia intracellularis (strain PHE/MN1-00), this protein is Small ribosomal subunit protein uS9.